The primary structure comprises 562 residues: Non-homologous end joining factor IFFO1 (562 aa).

Residues 65–116 (ALRNDLGSNINVLKTLNLRFRCFLAKVHELERRNRLLEKQLQQALEEGKQGR) are LMNA binding. The region spanning 73–529 (NINVLKTLNL…RLITQSGDRK (457 aa)) is the IF rod domain. The stretch at 85–117 (RCFLAKVHELERRNRLLEKQLQQALEEGKQGRR) forms a coiled coil. Residues 154 to 187 (RVLGSPSRSPAGPLASSAACHTSSSTSTSTAFSS) are disordered. Positions 168 to 187 (ASSAACHTSSSTSTSTAFSS) are enriched in low complexity. The stretch at 237 to 301 (EIRALYNVLA…MKVEQLKAEL (65 aa)) forms a coiled coil. A disordered region spans residues 364–401 (MGGRKRERKAAVEEDTSLSESDGPRQPEGAEEESTALS). The segment at 453–528 (EQEDSLEKVI…RRLITQSGDR (76 aa)) is XCCR4 binding. Required for localization to the double-strand breaks (DSBs). Residues 458 to 504 (LEKVIKDTESLFKTREKEYQETIDQIELELATAKNDMNRHLHEYMEM) are a coiled coil. The tract at residues 523–562 (TQSGDRKSPAFTAVPLSDPPPPPSETEDSDRDVSSDSSMR) is disordered. A compositionally biased stretch (basic and acidic residues) spans 553-562 (RDVSSDSSMR).

This sequence belongs to the intermediate filament family. Forms a heterotetramer with XRCC4. The interaction with XRCC4 is direct, involves LIG4-free XRCC4 and leads to relocalization of IFFO1 at the double-strand break (DSB) sites. Interacts with LMNA; the interaction forms an interior nucleoskeleton and the recruitment to DNA double-strand breaks.

Its subcellular location is the nucleus. It is found in the nucleoplasm. The protein resides in the nucleus inner membrane. The protein localises to the nucleus matrix. Functionally, nuclear matrix protein involved in the immobilization of broken DNA ends and the suppression of chromosome translocation during DNA double-strand breaks (DSBs). Interacts with the nuclear lamina component LMNA, resulting in the formation of a nucleoskeleton that will relocalize to the DSB sites in a XRCC4-dependent manner and promote the immobilization of the broken ends, thereby preventing chromosome translocation. Acts as a scaffold that allows the DNA repair protein XRCC4 and LMNA to assemble into a complex at the DSB sites. The protein is Non-homologous end joining factor IFFO1 of Mus musculus (Mouse).